The sequence spans 450 residues: Protein tweety homolog 1 (450 aa).

Residues 1–43 (MGAPPGYRPSAWVHLLHQLPRADFQLRPVPSVFAPQEQEYQQA) are Extracellular-facing. Residues 44 to 64 (LLLVAALAGLGLGLSLIFIAV) form a helical membrane-spanning segment. The Cytoplasmic portion of the chain corresponds to 65 to 88 (YLIRFCCCRPPEPPGSKIPSPGGG). The helical transmembrane segment at 89-109 (CVTWSCIVALLAGCTGIGIGF) threads the bilayer. At 110 to 214 (YGNSETSDGV…NVSFVEEYRW (105 aa)) the chain is on the extracellular side. Residues Asn130 and Asn205 are each glycosylated (N-linked (GlcNAc...) asparagine). The chain crosses the membrane as a helical span at residues 215–235 (LAYVLLLLLELLVCLFTLLGL). The Cytoplasmic portion of the chain corresponds to 236–240 (AKQSK). The helical transmembrane segment at 241 to 261 (WLVIVMTVMSLLVLVLSWGSM) threads the bilayer. At 262–390 (GLEAATAVGL…LRGLCEDALE (129 aa)) the chain is on the extracellular side. Intrachain disulfides connect Cys275/Cys385 and Cys303/Cys370. N-linked (GlcNAc...) asparagine glycosylation is found at Asn284 and Asn355. The helical transmembrane segment at 391-411 (GLLFLLLFSLLSAGALATALC) threads the bilayer. Topologically, residues 412–450 (SLPRAWALFPPSDDYDDTDDDDPFNPQESKRFVQWQSSI) are cytoplasmic. The segment at 428–450 (DTDDDDPFNPQESKRFVQWQSSI) is disordered. Ser440 carries the phosphoserine modification.

This sequence belongs to the tweety family. In terms of assembly, homotetramer; disulfide-linked. Homodimer. Post-translationally, N-glycosylated. Contains high-mannose, hybrid and complex oligosaccharides. As to expression, expressed in brain, eye, ovary and testis, and at lower levels in muscle, placenta, liver and lung.

It is found in the cell membrane. The catalysed reaction is chloride(in) = chloride(out). It carries out the reaction L-glutamate(out) = L-glutamate(in). Calcium-independent, swelling-dependent volume-regulated anion channel (VRAC-swell) which plays a pivotal role in the process of regulatory volume decrease (RVD) in the brain through the efflux of anions like chloride and organic osmolytes like glutamate. Functionally, ca(2+)-independent, swelling-activated chloride channel, possibly involved in regulation of cell volume. This Homo sapiens (Human) protein is Protein tweety homolog 1 (TTYH1).